A 331-amino-acid polypeptide reads, in one-letter code: L-lactate dehydrogenase A chain (331 aa).

NAD(+)-binding positions include 29 to 57 (GMVGMASAISILLKDLCDELAMVDVMEDK) and arginine 98. Substrate-binding residues include arginine 105, asparagine 137, and arginine 168. Asparagine 137 provides a ligand contact to NAD(+). Histidine 192 acts as the Proton acceptor in catalysis. Threonine 247 contacts substrate.

The protein belongs to the LDH/MDH superfamily. LDH family. In terms of assembly, homotetramer.

It is found in the cytoplasm. The enzyme catalyses (S)-lactate + NAD(+) = pyruvate + NADH + H(+). It functions in the pathway fermentation; pyruvate fermentation to lactate; (S)-lactate from pyruvate: step 1/1. Functionally, interconverts simultaneously and stereospecifically pyruvate and lactate with concomitant interconversion of NADH and NAD(+). This chain is L-lactate dehydrogenase A chain (ldha), found in Patagonotothen tessellata (Black southern cod).